The sequence spans 346 residues: Methylthioribose-1-phosphate isomerase (346 aa).

Substrate is bound by residues 48–50, arginine 91, and glutamine 200; that span reads RGA. The active-site Proton donor is the aspartate 241. 251-252 is a substrate binding site; sequence NK.

It belongs to the eIF-2B alpha/beta/delta subunits family. MtnA subfamily.

It catalyses the reaction 5-(methylsulfanyl)-alpha-D-ribose 1-phosphate = 5-(methylsulfanyl)-D-ribulose 1-phosphate. It functions in the pathway amino-acid biosynthesis; L-methionine biosynthesis via salvage pathway; L-methionine from S-methyl-5-thio-alpha-D-ribose 1-phosphate: step 1/6. Its function is as follows. Catalyzes the interconversion of methylthioribose-1-phosphate (MTR-1-P) into methylthioribulose-1-phosphate (MTRu-1-P). The sequence is that of Methylthioribose-1-phosphate isomerase from Picosynechococcus sp. (strain ATCC 27264 / PCC 7002 / PR-6) (Agmenellum quadruplicatum).